The sequence spans 338 residues: Anthranilate phosphoribosyltransferase (338 aa).

Residues Gly-78, 81 to 82 (GD), Ser-86, 88 to 91 (NIST), 106 to 114 (KHGNRSITS), and Ser-118 each bind 5-phospho-alpha-D-ribose 1-diphosphate. Residue Gly-78 participates in anthranilate binding. Ser-90 lines the Mg(2+) pocket. Asn-109 lines the anthranilate pocket. Position 163 (Arg-163) interacts with anthranilate. The Mg(2+) site is built by Asp-222 and Glu-223.

This sequence belongs to the anthranilate phosphoribosyltransferase family. As to quaternary structure, homodimer. Mg(2+) serves as cofactor.

It carries out the reaction N-(5-phospho-beta-D-ribosyl)anthranilate + diphosphate = 5-phospho-alpha-D-ribose 1-diphosphate + anthranilate. It functions in the pathway amino-acid biosynthesis; L-tryptophan biosynthesis; L-tryptophan from chorismate: step 2/5. Functionally, catalyzes the transfer of the phosphoribosyl group of 5-phosphorylribose-1-pyrophosphate (PRPP) to anthranilate to yield N-(5'-phosphoribosyl)-anthranilate (PRA). The polypeptide is Anthranilate phosphoribosyltransferase (Staphylococcus haemolyticus (strain JCSC1435)).